A 202-amino-acid polypeptide reads, in one-letter code: Apolipoprotein R (202 aa).

Residues 1–28 (MPPNLQRIFPALCLLGVLFLLHCTPVLC) form the signal peptide. Sushi domains lie at 29 to 87 (GCDN…QCKA) and 88 to 145 (LCPK…KCEW). 4 disulfides stabilise this stretch: cysteine 30–cysteine 73, cysteine 59–cysteine 85, cysteine 89–cysteine 130, and cysteine 116–cysteine 143.

As to quaternary structure, forms high molecular weight disulfide-linked complexes. Plasma. Found on very low-density lipoprotein (VLDL), on chylomicrons, and in the D &gt; 1.21 g/ml fraction of pig plasma. Found in liver, spleen, lung, bone marrow and lymph node.

It is found in the secreted. May be a lipoprotein-borne regulator of either the coagulation or the complement cascades. The polypeptide is Apolipoprotein R (APOR) (Sus scrofa (Pig)).